Consider the following 113-residue polypeptide: MATIRNLKIKTSTCKRIVKELHSYEKEVEREAAKTADMKDKGADPYDLKQQENVLGESRMMIPDCHKRLESALADLKSTLAELEETDEKEGPEIEDAKKTVADVEKQFPTEDA.

Residues 83–113 (LEETDEKEGPEIEDAKKTVADVEKQFPTEDA) are disordered. Residues 89 to 113 (KEGPEIEDAKKTVADVEKQFPTEDA) show a composition bias toward basic and acidic residues.

Belongs to the TBCA family. Monomer. Supercomplex made of cofactors A to E. Cofactors A and D function by capturing and stabilizing tubulin in a quasi-native conformation. Cofactor E binds to the cofactor D-tubulin complex; interaction with cofactor C then causes the release of tubulin polypeptides that are committed to the native state. Interacts with TUBB9. As to expression, expressed in leaves, roots, flowers and stems.

Its function is as follows. Tubulin-folding protein involved in the control of the alpha-/beta-tubulin monomer balance. Functions as a reservoir of bound and non-toxic beta-tubulin. Required in the developing embryo. The protein is Tubulin-folding cofactor A (TFCA) of Arabidopsis thaliana (Mouse-ear cress).